Here is a 157-residue protein sequence, read N- to C-terminus: MDPKSPEFIIDQPLKILGFVFDELSATRVSGHLTLTEKCCQPFKVLHGGVSALIAEALASLGAGIASGFKRVAGIHLSIHHLRPAALGEIVFAESFPVSVGKNIQVWEVRLWKAKKTETPDNKIMVSTSRVTLFCGLPIPDHVKDAPDELKKVISKL.

Residue glutamate 56 is part of the active site. The short motif at 154–156 (ISK) is the Microbody targeting signal element.

The protein belongs to the 4-hydroxybenzoyl-CoA thioesterase family. DHNA-CoA hydrolase subfamily. As to quaternary structure, homotetramers.

The protein resides in the peroxisome. Its pathway is cofactor biosynthesis; phylloquinone biosynthesis. It functions in the pathway quinol/quinone metabolism; 1,4-dihydroxy-2-naphthoate biosynthesis; 1,4-dihydroxy-2-naphthoate from chorismate: step 7/7. In terms of biological role, catalyzes the hydrolysis of the thioester bond of 1,4-dihydroxy-2-naphthoyl-CoA (DHNA-CoA) in peroxisomes, a necessary step to form the naphthoquinone ring of phylloquinone (vitamin K(1)). Displayed also slight thioesterase activity towards benzoyl-CoA. Is not active on phenylacetyl-CoA, succinyl-CoA and palmitoyl-CoA thioesters. The sequence is that of 1,4-dihydroxy-2-naphthoyl-CoA thioesterase 2 from Arabidopsis thaliana (Mouse-ear cress).